Consider the following 183-residue polypeptide: uncharacterized protein (183 aa).

Helical transmembrane passes span 26–48, 72–91, 104–121, and 125–147; these read FVAI…IIFY, LLVR…KVFI, IIEA…LIVF, and FTFW…YVLL.

The protein localises to the cell membrane. This is an uncharacterized protein from Aquifex aeolicus (strain VF5).